The primary structure comprises 178 residues: Large ribosomal subunit protein uL5 (178 aa).

This sequence belongs to the universal ribosomal protein uL5 family. In terms of assembly, part of the 50S ribosomal subunit; contacts the 5S rRNA and probably tRNA. Forms a bridge to the 30S subunit in the 70S ribosome.

Its function is as follows. This is one of the proteins that bind and probably mediate the attachment of the 5S RNA into the large ribosomal subunit, where it forms part of the central protuberance. In the 70S ribosome it contacts protein S13 of the 30S subunit (bridge B1b), connecting the 2 subunits; this bridge is implicated in subunit movement. May contact the P site tRNA; the 5S rRNA and some of its associated proteins might help stabilize positioning of ribosome-bound tRNAs. The protein is Large ribosomal subunit protein uL5 of Sulfolobus acidocaldarius (strain ATCC 33909 / DSM 639 / JCM 8929 / NBRC 15157 / NCIMB 11770).